Consider the following 390-residue polypeptide: Alanine racemase (390 aa).

Lysine 46 (proton acceptor; specific for D-alanine) is an active-site residue. An N6-(pyridoxal phosphate)lysine modification is found at lysine 46. A substrate-binding site is contributed by arginine 144. Tyrosine 275 functions as the Proton acceptor; specific for L-alanine in the catalytic mechanism. Methionine 323 is a binding site for substrate.

It belongs to the alanine racemase family. Pyridoxal 5'-phosphate is required as a cofactor.

It carries out the reaction L-alanine = D-alanine. It functions in the pathway amino-acid biosynthesis; D-alanine biosynthesis; D-alanine from L-alanine: step 1/1. In terms of biological role, catalyzes the interconversion of L-alanine and D-alanine. May also act on other amino acids. The protein is Alanine racemase (alr) of Mycolicibacterium vanbaalenii (strain DSM 7251 / JCM 13017 / BCRC 16820 / KCTC 9966 / NRRL B-24157 / PYR-1) (Mycobacterium vanbaalenii).